Consider the following 329-residue polypeptide: Mas-related G-protein coupled receptor member X2 (329 aa).

The Extracellular segment spans residues 1–33; that stretch reads MDPTTPAWRTESTTMNGNDQALPLLCGKEILIS. A helical membrane pass occupies residues 34 to 54; sequence VFLILFIALVGLVGNGFVLWL. At 55-63 the chain is on the cytoplasmic side; the sequence is LGFRMRRNA. The helical transmembrane segment at 64–84 threads the bilayer; sequence FSVYVLSLAGADFLFLCFQII. Residues 85–96 lie on the Extracellular side of the membrane; sequence NCLVYLSNFFCS. The helical transmembrane segment at 97 to 117 threads the bilayer; that stretch reads SSINFPSFFTTVMTCAYLAGL. Topologically, residues 118–144 are cytoplasmic; sequence SMLSTISTERCLSVLWPIWYRCRRPRH. A helical transmembrane segment spans residues 145–165; it reads LSAVACVLLWALSLLLSILEG. Over 166-183 the chain is Extracellular; sequence KFCGLFGDGDSGWCQTFD. A helical transmembrane segment spans residues 184–204; sequence LITAAWLIFLFMVLCGSSLAL. Topologically, residues 205–227 are cytoplasmic; sequence LVRILCGSRGLPLTRLYLTILLT. The chain crosses the membrane as a helical span at residues 228–248; it reads VLVFLLCGLPFGIQWFLILWI. Residues 249–263 are Extracellular-facing; sequence WKNSDVLFCHIHPVS. The helical transmembrane segment at 264–284 threads the bilayer; the sequence is VVLSSLNSSANPIIYFFVGSF. The Cytoplasmic portion of the chain corresponds to 285 to 329; the sequence is RKQWQLQQPILKLALQRALQDIAEVDHSEGCFRQGTPEMSRSSLV.

Belongs to the G-protein coupled receptor 1 family. Mas subfamily.

The protein resides in the cell membrane. In terms of biological role, mast cell-specific receptor for basic secretagogues, i.e. cationic amphiphilic drugs, as well as endo- or exogenous peptides, consisting of a basic head group and a hydrophobic core. Recognizes and binds small molecules containing a cyclized tetrahydroisoquinoline (THIQ), such as non-steroidal neuromuscular blocking drugs (NMBDs), including tubocurarine and atracurium. In response to these compounds, mediates pseudo-allergic reactions characterized by histamine release, inflammation and airway contraction. The sequence is that of Mas-related G-protein coupled receptor member X2 (MRGPRX2) from Gorilla gorilla gorilla (Western lowland gorilla).